Consider the following 621-residue polypeptide: Probable potassium transport system protein Kup 2 (621 aa).

12 helical membrane passes run 12–32 (ITVAAIGVVFGDIGTSPLYAL), 52–72 (VLSLVFWAIIVLVTIKYVAII), 101–121 (WIITLLGIFAAALFYGDSMIT), 138–158 (PDLKSYVIPITLGILTGLFFI), 166–186 (VGKLFGPVMVAWFGILAILGL), 213–233 (GLAFLALGSVVLAVTGGEALY), 249–269 (FGFVMPALVLNYFGQGALLLI), 286–306 (ALIPMVGLATAATVIASQAVI), 338–358 (IYVPFTNWSLYLAVIALVIGF), 370–390 (IAVTGTMLIDTILVAFVMVLM), 396–416 (LLVALVAGTLLLVDIAFFAAN), and 420–440 (IPEGGWFPLAMGLVSFTVLTT).

It belongs to the HAK/KUP transporter (TC 2.A.72) family.

It localises to the cell inner membrane. The enzyme catalyses K(+)(in) + H(+)(in) = K(+)(out) + H(+)(out). Transport of potassium into the cell. Likely operates as a K(+):H(+) symporter. The chain is Probable potassium transport system protein Kup 2 from Dechloromonas aromatica (strain RCB).